We begin with the raw amino-acid sequence, 140 residues long: Large-conductance mechanosensitive channel (140 aa).

The next 3 membrane-spanning stretches (helical) occupy residues 7-27 (EFAFKGNVLDLAVAVVMGAAF), 30-50 (IITSLVTYIIMPLIGLIFGTV), and 64-84 (GLFVQSVIDFLIVAFALFLFV).

The protein belongs to the MscL family. Homopentamer.

It is found in the cell membrane. Functionally, channel that opens in response to stretch forces in the membrane lipid bilayer. May participate in the regulation of osmotic pressure changes within the cell. This is Large-conductance mechanosensitive channel from Staphylococcus carnosus (strain TM300).